A 265-amino-acid polypeptide reads, in one-letter code: Undecaprenyl-diphosphatase (265 aa).

Helical transmembrane passes span 38–58 (RSDF…CLAL), 75–95 (RDYV…GLIV), 108–128 (PVAW…HFAG), 135–155 (VVTW…GVFP), 181–201 (FVFM…LLEM), 215–235 (VAVA…WLLG), and 244–264 (VFAV…PAAA).

The protein belongs to the UppP family.

The protein resides in the cell inner membrane. It carries out the reaction di-trans,octa-cis-undecaprenyl diphosphate + H2O = di-trans,octa-cis-undecaprenyl phosphate + phosphate + H(+). In terms of biological role, catalyzes the dephosphorylation of undecaprenyl diphosphate (UPP). Confers resistance to bacitracin. This Xanthomonas euvesicatoria pv. vesicatoria (strain 85-10) (Xanthomonas campestris pv. vesicatoria) protein is Undecaprenyl-diphosphatase.